The following is a 427-amino-acid chain: Gamma-glutamyl phosphate reductase (427 aa).

It belongs to the gamma-glutamyl phosphate reductase family.

The protein localises to the cytoplasm. It catalyses the reaction L-glutamate 5-semialdehyde + phosphate + NADP(+) = L-glutamyl 5-phosphate + NADPH + H(+). Its pathway is amino-acid biosynthesis; L-proline biosynthesis; L-glutamate 5-semialdehyde from L-glutamate: step 2/2. In terms of biological role, catalyzes the NADPH-dependent reduction of L-glutamate 5-phosphate into L-glutamate 5-semialdehyde and phosphate. The product spontaneously undergoes cyclization to form 1-pyrroline-5-carboxylate. The polypeptide is Gamma-glutamyl phosphate reductase (Rhizobium johnstonii (strain DSM 114642 / LMG 32736 / 3841) (Rhizobium leguminosarum bv. viciae)).